Consider the following 416-residue polypeptide: F-box/FBD/LRR-repeat protein At1g13570 (416 aa).

The F-box domain maps to 5 to 53; sequence PDFISDLPQSIIENILTRLSIRDAIRTSVLSSKWRYKWSTLTDLVFDEK. LRR repeat units lie at residues 115–142, 164–189, 203–229, 238–263, and 294–321; these read VLKL…ELCH, QILV…SLSY, MYLY…SVSM, FEQS…VGYI, and CFED…KVSA. An FBD domain is found at 346–384; it reads LPSLESVKITDASGIRYELEFIRFLLGTSPVLETVTVSS.

The protein is F-box/FBD/LRR-repeat protein At1g13570 of Arabidopsis thaliana (Mouse-ear cress).